Here is a 401-residue protein sequence, read N- to C-terminus: Elongation factor Tu 1 (401 aa).

A tr-type G domain is found at 10 to 209; that stretch reads KPHVNVGTIG…AVDEYIPTPV (200 aa). The G1 stretch occupies residues 19–26; it reads GHVDHGKT. 19–26 is a binding site for GTP; sequence GHVDHGKT. Mg(2+) is bound at residue Thr-26. A G2 region spans residues 60 to 64; sequence GITIA. Residues 81–84 form a G3 region; sequence DCPG. GTP-binding positions include 81 to 85 and 136 to 139; these read DCPGH and NKVD. The tract at residues 136–139 is G4; it reads NKVD. Residues 174–176 are G5; it reads SAL.

This sequence belongs to the TRAFAC class translation factor GTPase superfamily. Classic translation factor GTPase family. EF-Tu/EF-1A subfamily. As to quaternary structure, monomer.

It is found in the cytoplasm. It carries out the reaction GTP + H2O = GDP + phosphate + H(+). Functionally, GTP hydrolase that promotes the GTP-dependent binding of aminoacyl-tRNA to the A-site of ribosomes during protein biosynthesis. This Roseiflexus sp. (strain RS-1) protein is Elongation factor Tu 1.